Here is a 284-residue protein sequence, read N- to C-terminus: Bifunctional protein FolD (284 aa).

NADP(+) is bound by residues 165 to 167, serine 190, and isoleucine 231; that span reads GRS.

The protein belongs to the tetrahydrofolate dehydrogenase/cyclohydrolase family. Homodimer.

It catalyses the reaction (6R)-5,10-methylene-5,6,7,8-tetrahydrofolate + NADP(+) = (6R)-5,10-methenyltetrahydrofolate + NADPH. The catalysed reaction is (6R)-5,10-methenyltetrahydrofolate + H2O = (6R)-10-formyltetrahydrofolate + H(+). The protein operates within one-carbon metabolism; tetrahydrofolate interconversion. Its function is as follows. Catalyzes the oxidation of 5,10-methylenetetrahydrofolate to 5,10-methenyltetrahydrofolate and then the hydrolysis of 5,10-methenyltetrahydrofolate to 10-formyltetrahydrofolate. This chain is Bifunctional protein FolD, found in Dechloromonas aromatica (strain RCB).